We begin with the raw amino-acid sequence, 363 residues long: Branched-chain-amino-acid aminotransferase 2 (363 aa).

Lys-197 is subject to N6-(pyridoxal phosphate)lysine.

The protein belongs to the class-IV pyridoxal-phosphate-dependent aminotransferase family. Pyridoxal 5'-phosphate is required as a cofactor.

It carries out the reaction L-leucine + 2-oxoglutarate = 4-methyl-2-oxopentanoate + L-glutamate. The enzyme catalyses L-isoleucine + 2-oxoglutarate = (S)-3-methyl-2-oxopentanoate + L-glutamate. It catalyses the reaction L-valine + 2-oxoglutarate = 3-methyl-2-oxobutanoate + L-glutamate. Its pathway is amino-acid biosynthesis; L-isoleucine biosynthesis; L-isoleucine from 2-oxobutanoate: step 4/4. The protein operates within amino-acid biosynthesis; L-leucine biosynthesis; L-leucine from 3-methyl-2-oxobutanoate: step 4/4. It participates in amino-acid biosynthesis; L-valine biosynthesis; L-valine from pyruvate: step 4/4. With respect to regulation, inhibited by canaline. In terms of biological role, transaminates branched-chain amino acids and ketoglutarate. The chain is Branched-chain-amino-acid aminotransferase 2 (ilvK) from Bacillus subtilis (strain 168).